The following is a 261-amino-acid chain: MKKRNITEFQVLSEIIRKQPHIKQKEIAENLGITVQAVSEHIRNLVKEGYVKSRGRGEYVVTEKGLRKLKNWISEFKDYLDEINTAVYRYKDIWPAIADEDVKDGETVYLFMKNGLLYASKQPKGEAKAKALYGGKKGEDIAICEIKGIIDVPKGKVIVFRIPPEVVGGSRAVDFNLIKENIDNLDDYVIATMGTVAYVVACKLGLKPDIRFAVPEAIVNACNRGCNVIALITGKMAEKVIKKLDNAKISYTVLDATKENK.

This is an uncharacterized protein from Methanocaldococcus jannaschii (strain ATCC 43067 / DSM 2661 / JAL-1 / JCM 10045 / NBRC 100440) (Methanococcus jannaschii).